The sequence spans 333 residues: Zinc-type alcohol dehydrogenase-like protein SACOL2177 (333 aa).

It belongs to the zinc-containing alcohol dehydrogenase family. Quinone oxidoreductase subfamily.

This is Zinc-type alcohol dehydrogenase-like protein SACOL2177 from Staphylococcus aureus (strain COL).